We begin with the raw amino-acid sequence, 150 residues long: Large ribosomal subunit protein bL9 (150 aa).

This sequence belongs to the bacterial ribosomal protein bL9 family.

Its function is as follows. Binds to the 23S rRNA. The protein is Large ribosomal subunit protein bL9 of Corynebacterium glutamicum (strain ATCC 13032 / DSM 20300 / JCM 1318 / BCRC 11384 / CCUG 27702 / LMG 3730 / NBRC 12168 / NCIMB 10025 / NRRL B-2784 / 534).